Reading from the N-terminus, the 135-residue chain is Large ribosomal subunit protein uL16c (135 aa).

Residues 1–17 (MLSPKRTRFRKQHRGRM) are compositionally biased toward basic residues. The interval 1-20 (MLSPKRTRFRKQHRGRMKGT) is disordered.

The protein belongs to the universal ribosomal protein uL16 family. In terms of assembly, part of the 50S ribosomal subunit.

The protein resides in the plastid. It localises to the chloroplast. The sequence is that of Large ribosomal subunit protein uL16c from Lemna minor (Common duckweed).